Here is a 154-residue protein sequence, read N- to C-terminus: uncharacterized protein (154 aa).

Position 12–19 (12–19 (GSSDVGKT)) interacts with GTP. The G domain maps to 17–112 (GKTTLMENLI…KIPYGIFINK (96 aa)).

The protein to M.thermoautotrophicum MTH765.

This is an uncharacterized protein from Methanocaldococcus jannaschii (strain ATCC 43067 / DSM 2661 / JAL-1 / JCM 10045 / NBRC 100440) (Methanococcus jannaschii).